We begin with the raw amino-acid sequence, 105 residues long: MSPISQKGEAVCLSVRVQPRSSKSGVAGMYGEQLKICLKSAPVDNAANKECCELLAKALGVPRSSVSVMKGASSRSKVLKVEGVTPAAVREALVGMLGDEAEAGA.

This sequence belongs to the UPF0235 family.

In Chlorobaculum tepidum (strain ATCC 49652 / DSM 12025 / NBRC 103806 / TLS) (Chlorobium tepidum), this protein is UPF0235 protein CT1832.